We begin with the raw amino-acid sequence, 179 residues long: Large ribosomal subunit protein uL5 (179 aa).

This sequence belongs to the universal ribosomal protein uL5 family. In terms of assembly, part of the 50S ribosomal subunit; part of the 5S rRNA/L5/L18/L25 subcomplex. Contacts the 5S rRNA and the P site tRNA. Forms a bridge to the 30S subunit in the 70S ribosome.

Functionally, this is one of the proteins that bind and probably mediate the attachment of the 5S RNA into the large ribosomal subunit, where it forms part of the central protuberance. In the 70S ribosome it contacts protein S13 of the 30S subunit (bridge B1b), connecting the 2 subunits; this bridge is implicated in subunit movement. Contacts the P site tRNA; the 5S rRNA and some of its associated proteins might help stabilize positioning of ribosome-bound tRNAs. The protein is Large ribosomal subunit protein uL5 of Anaplasma marginale (strain Florida).